A 511-amino-acid chain; its full sequence is V-type proton ATPase subunit B (511 aa).

Arg381 lines the ATP pocket. Residues 484 to 511 are disordered; that stretch reads FYGRDREQDDDEEEEEDPDKSGDKLIDA. Positions 491-501 are enriched in acidic residues; sequence QDDDEEEEEDP. A compositionally biased stretch (basic and acidic residues) spans 502–511; it reads DKSGDKLIDA.

The protein belongs to the ATPase alpha/beta chains family. As to quaternary structure, V-ATPase is a heteromultimeric enzyme composed of a peripheral catalytic V1 complex (components A to H) attached to an integral membrane V0 proton pore complex (components: a, c, c', c'', d, e, f and VOA1).

It is found in the vacuole membrane. In terms of biological role, non-catalytic subunit of the V1 complex of vacuolar(H+)-ATPase (V-ATPase), a multisubunit enzyme composed of a peripheral complex (V1) that hydrolyzes ATP and a membrane integral complex (V0) that translocates protons. V-ATPase is responsible for acidifying and maintaining the pH of intracellular compartments. This Candida tropicalis (Yeast) protein is V-type proton ATPase subunit B (VMA2).